A 98-amino-acid chain; its full sequence is Large ribosomal subunit protein uL23 (98 aa).

Belongs to the universal ribosomal protein uL23 family. In terms of assembly, part of the 50S ribosomal subunit. Contacts protein L29, and trigger factor when it is bound to the ribosome.

One of the early assembly proteins it binds 23S rRNA. One of the proteins that surrounds the polypeptide exit tunnel on the outside of the ribosome. Forms the main docking site for trigger factor binding to the ribosome. This is Large ribosomal subunit protein uL23 from Halorhodospira halophila (strain DSM 244 / SL1) (Ectothiorhodospira halophila (strain DSM 244 / SL1)).